The sequence spans 278 residues: Bifunctional protein FolD (278 aa).

Residues 165–167, Ser190, and Thr231 contribute to the NADP(+) site; that span reads GRS.

The protein belongs to the tetrahydrofolate dehydrogenase/cyclohydrolase family. In terms of assembly, homodimer.

The catalysed reaction is (6R)-5,10-methylene-5,6,7,8-tetrahydrofolate + NADP(+) = (6R)-5,10-methenyltetrahydrofolate + NADPH. The enzyme catalyses (6R)-5,10-methenyltetrahydrofolate + H2O = (6R)-10-formyltetrahydrofolate + H(+). It participates in one-carbon metabolism; tetrahydrofolate interconversion. Catalyzes the oxidation of 5,10-methylenetetrahydrofolate to 5,10-methenyltetrahydrofolate and then the hydrolysis of 5,10-methenyltetrahydrofolate to 10-formyltetrahydrofolate. In Clostridium acetobutylicum (strain ATCC 824 / DSM 792 / JCM 1419 / IAM 19013 / LMG 5710 / NBRC 13948 / NRRL B-527 / VKM B-1787 / 2291 / W), this protein is Bifunctional protein FolD.